A 291-amino-acid polypeptide reads, in one-letter code: Shikimate dehydrogenase (NADP(+)) (291 aa).

Shikimate contacts are provided by residues 23 to 25 (SFS) and T70. Residue K74 is the Proton acceptor of the active site. 2 residues coordinate shikimate: N95 and D110. NADP(+) is bound by residues 135 to 139 (GAGGA) and L232. A shikimate-binding site is contributed by Y234. NADP(+) is bound at residue G255.

It belongs to the shikimate dehydrogenase family. In terms of assembly, homodimer.

It carries out the reaction shikimate + NADP(+) = 3-dehydroshikimate + NADPH + H(+). Its pathway is metabolic intermediate biosynthesis; chorismate biosynthesis; chorismate from D-erythrose 4-phosphate and phosphoenolpyruvate: step 4/7. Functionally, involved in the biosynthesis of the chorismate, which leads to the biosynthesis of aromatic amino acids. Catalyzes the reversible NADPH linked reduction of 3-dehydroshikimate (DHSA) to yield shikimate (SA). The sequence is that of Shikimate dehydrogenase (NADP(+)) from Desulforamulus reducens (strain ATCC BAA-1160 / DSM 100696 / MI-1) (Desulfotomaculum reducens).